We begin with the raw amino-acid sequence, 55 residues long: Preprotein translocase subunit SecG (55 aa).

Residues M1–D31 lie on the Cytoplasmic side of the membrane. A helical transmembrane segment spans residues P32–I51. The Extracellular portion of the chain corresponds to F52–V55.

This sequence belongs to the SEC61-beta family. In terms of assembly, component of the protein translocase complex. Heterotrimer consisting of alpha (SecY), beta (SecG) and gamma (SecE) subunits. Can form oligomers of the heterotrimer.

It is found in the cell membrane. In terms of biological role, involved in protein export. The function of the beta subunit is unknown, but it may be involved in stabilization of the trimeric complex. The chain is Preprotein translocase subunit SecG from Picrophilus torridus (strain ATCC 700027 / DSM 9790 / JCM 10055 / NBRC 100828 / KAW 2/3).